The chain runs to 286 residues: Bifunctional protein FolD (286 aa).

NADP(+) contacts are provided by residues 165–167 (GRS) and Ser190.

It belongs to the tetrahydrofolate dehydrogenase/cyclohydrolase family. As to quaternary structure, homodimer.

The catalysed reaction is (6R)-5,10-methylene-5,6,7,8-tetrahydrofolate + NADP(+) = (6R)-5,10-methenyltetrahydrofolate + NADPH. It catalyses the reaction (6R)-5,10-methenyltetrahydrofolate + H2O = (6R)-10-formyltetrahydrofolate + H(+). It functions in the pathway one-carbon metabolism; tetrahydrofolate interconversion. Catalyzes the oxidation of 5,10-methylenetetrahydrofolate to 5,10-methenyltetrahydrofolate and then the hydrolysis of 5,10-methenyltetrahydrofolate to 10-formyltetrahydrofolate. The sequence is that of Bifunctional protein FolD from Staphylococcus epidermidis (strain ATCC 35984 / DSM 28319 / BCRC 17069 / CCUG 31568 / BM 3577 / RP62A).